A 325-amino-acid polypeptide reads, in one-letter code: MIVLGIETSCDETAVAVLENEKILSSVVSSQIDVHKKFGGVVPEIAARHHLSNLPVVFKNALSQAKISLNDIDLISVTYGPGLIGALLVGISFAKGLSLKLNKPLIGINHIVGHVYANYLTYPNLKPPFIVLMVSGGHTEILHIQNEKIEVLGKTLDDAAGEAFDKVARILGLGYPGGPEIEKIAQYGNDKAFNFPKPLYDSKDYNFSFSGLKTAVLYTIKKLDKIPKEDVAASFQRAVTDILLHKTFKAAKDKKINTVVLAGGVAANKYLRTKALEISKKEGIILLIPPIEFCTDNAAMIAIAGYKLFDGTSDLNIDAMPNLNL.

Fe cation-binding residues include His-110 and His-114. Substrate-binding positions include 133 to 137, Asp-165, Gly-178, and Asn-268; that span reads MVSGG. Asp-296 is a binding site for Fe cation.

It belongs to the KAE1 / TsaD family. Requires Fe(2+) as cofactor.

The protein localises to the cytoplasm. It carries out the reaction L-threonylcarbamoyladenylate + adenosine(37) in tRNA = N(6)-L-threonylcarbamoyladenosine(37) in tRNA + AMP + H(+). Functionally, required for the formation of a threonylcarbamoyl group on adenosine at position 37 (t(6)A37) in tRNAs that read codons beginning with adenine. Is involved in the transfer of the threonylcarbamoyl moiety of threonylcarbamoyl-AMP (TC-AMP) to the N6 group of A37, together with TsaE and TsaB. TsaD likely plays a direct catalytic role in this reaction. This Thermosipho melanesiensis (strain DSM 12029 / CIP 104789 / BI429) protein is tRNA N6-adenosine threonylcarbamoyltransferase.